The sequence spans 92 residues: RNA-binding protein Hfq (92 aa).

The 60-residue stretch at 9–68 (DPFLNALRRERVPVSVYLVNGIKLQGTIESFDQFVVLLRNTVSQMVYKHAISTVVPARNV) folds into the Sm domain. The segment at 72 to 92 (PGGGYVQSNENNQAEDDDVEQ) is disordered.

It belongs to the Hfq family. As to quaternary structure, homohexamer.

Its function is as follows. RNA chaperone that binds small regulatory RNA (sRNAs) and mRNAs to facilitate mRNA translational regulation in response to envelope stress, environmental stress and changes in metabolite concentrations. Also binds with high specificity to tRNAs. The protein is RNA-binding protein Hfq of Xanthomonas campestris pv. campestris (strain 8004).